We begin with the raw amino-acid sequence, 602 residues long: ATP-dependent lipid A-core flippase (602 aa).

Transmembrane regions (helical) follow at residues 28–48, 84–104, 158–178, 180–200, and 268–288; these read VGIF…QPML, LLII…NYFL, IKVV…LLWM, WHLT…VSIA, and PMLQ…VLFL. The region spanning 32 to 323 is the ABC transmembrane type-1 domain; that stretch reads LLSIVGFVIF…LSEVSSTIQK (292 aa). In terms of domain architecture, ABC transporter spans 355–591; sequence LEVRNLSFTY…NGHYARLHAM (237 aa). ATP is bound at residue 389-396; it reads GRSGSGKS.

This sequence belongs to the ABC transporter superfamily. Lipid exporter (TC 3.A.1.106) family. Homodimer.

Its subcellular location is the cell inner membrane. The catalysed reaction is ATP + H2O + lipid A-core oligosaccharideSide 1 = ADP + phosphate + lipid A-core oligosaccharideSide 2.. Functionally, involved in lipopolysaccharide (LPS) biosynthesis. Translocates lipid A-core from the inner to the outer leaflet of the inner membrane. Transmembrane domains (TMD) form a pore in the inner membrane and the ATP-binding domain (NBD) is responsible for energy generation. The polypeptide is ATP-dependent lipid A-core flippase (Pseudomonas putida (strain ATCC 47054 / DSM 6125 / CFBP 8728 / NCIMB 11950 / KT2440)).